Reading from the N-terminus, the 509-residue chain is Methylthioalkylmalate synthase 1-1, chloroplastic (509 aa).

Residues Met-1–Tyr-55 constitute a chloroplast transit peptide. One can recognise a Pyruvate carboxyltransferase domain in the interval Val-91–Met-365. Residues Asp-100, His-298, and His-300 each coordinate Mn(2+).

The protein belongs to the alpha-IPM synthase/homocitrate synthase family. As to quaternary structure, monomer. Mn(2+) is required as a cofactor. It depends on Co(2+) as a cofactor.

The protein localises to the plastid. Its subcellular location is the chloroplast. The catalysed reaction is 4-methylsulfanyl-2-oxobutanoate + acetyl-CoA + H2O = 2-(2-methylsulfanyl)ethylmalate + CoA + H(+). Its pathway is secondary metabolite biosynthesis. Inhibited by EDTA, Cu(2+) and Zn(2+). Functionally, determines the side chain length of aliphatic glucosinolate structures. Involved in the biosynthesis of glucosinolate derivative natural products such as 6-(methylsulfinyl)hexylisothiocyanate (6-MSITC), a compound found in wasabi with diverse health-promoting properties. Catalyzes the conversion of 4-methylsulfanyl-2-oxobutanoate (4-MTOB) into 2-(2-methylsulfanyl)ethylmalate (2-(2-MT)EM). The chain is Methylthioalkylmalate synthase 1-1, chloroplastic from Eutrema japonicum (Wasabi plant).